The primary structure comprises 247 residues: ATP synthase subunit a, chloroplastic (247 aa).

A run of 5 helical transmembrane segments spans residues 38–58 (QVLI…TIAV), 95–115 (VPFI…GALF), 134–154 (INTT…AGLT), 199–219 (LVVV…VMFL), and 220–240 (GLFT…AYIG).

It belongs to the ATPase A chain family. In terms of assembly, F-type ATPases have 2 components, CF(1) - the catalytic core - and CF(0) - the membrane proton channel. CF(1) has five subunits: alpha(3), beta(3), gamma(1), delta(1), epsilon(1). CF(0) has four main subunits: a, b, b' and c.

It is found in the plastid. Its subcellular location is the chloroplast thylakoid membrane. Functionally, key component of the proton channel; it plays a direct role in the translocation of protons across the membrane. This Piper cenocladum (Ant piper) protein is ATP synthase subunit a, chloroplastic.